Reading from the N-terminus, the 208-residue chain is Sodium/potassium-transporting ATPase subunit beta-1-interacting protein 2 (208 aa).

4 helical membrane-spanning segments follow: residues 1-23 (MGYCSGRCTLIFICGMQLVCVLE), 35-55 (APILANFVHIIIVILGLFGTI), 64-84 (GYAVWLVLWVTWNVFVICFYL), and 148-168 (VAHSSLQIVLALAGFIYACYV).

It belongs to the NKAIN family. Interacts with ATP1B1. Detected in the brain only and specifically in neurons; expressed in multiple regions such as cerebral cortex, thalamus, cerebellum, olfactory bulb and brainstem, but not in the hippocampus.

Its subcellular location is the cell membrane. This chain is Sodium/potassium-transporting ATPase subunit beta-1-interacting protein 2 (Nkain2), found in Mus musculus (Mouse).